Here is an 811-residue protein sequence, read N- to C-terminus: Potassium transporter 7 (811 aa).

The Cytoplasmic segment spans residues 1 to 52 (MPSYQYLLSLLFYILDCTDRFSVIVTIHNHRVGVLMIVLLQDQWKSYCRTIS). The chain crosses the membrane as a helical span at residues 53–73 (LLAFQSFGVVYGDLSTSPLYV). The Extracellular segment spans residues 74–93 (YKSAFSGRLNNYRDETTIFG). The helical transmembrane segment at 94–114 (LFSLIFWTLTLLPLLKYVIIV) threads the bilayer. Topologically, residues 115–181 (LNADDNGEGG…EKHRKLRTCL (67 aa)) are cytoplasmic. A helical transmembrane segment spans residues 182–202 (LLFVLFGACMVIGDGVFTPAI). Over 203-217 (SVLSAISGLKDPGPG) the chain is Extracellular. A helical transmembrane segment spans residues 218–238 (GIPDGWVVFIACIVLVGLFAL). At 239-245 (QHRGTHR) the chain is on the cytoplasmic side. The chain crosses the membrane as a helical span at residues 246–266 (VAFMFAPIVVVWLLSIGVIGL). The Extracellular segment spans residues 267-296 (YNIIHWNHRIFLALSPHYVIKFFKMTGKDG). The helical transmembrane segment at 297–317 (WLSLGGVLLAITGTEAMFADL) threads the bilayer. The Cytoplasmic portion of the chain corresponds to 318–326 (GHFTAASIR). The helical transmembrane segment at 327–347 (LAFVGAIYPCLVLQYMGQAAF) threads the bilayer. The Extracellular segment spans residues 348–366 (LSRNMSAVEDSFYQSVPRS). An N-linked (GlcNAc...) asparagine glycan is attached at N351. Residues 367–387 (LFWPVFVIATLAAVVGSQSII) traverse the membrane as a helical segment. Residues 388–418 (SATFSIVKQCLSLGCFPRVKVVHTSRWIHGQ) lie on the Cytoplasmic side of the membrane. Residues 419 to 439 (IYIPEINWILMVLCLAVTLGF) form a helical membrane-spanning segment. The Extracellular segment spans residues 440–450 (RDTTVIGNAYG). A helical membrane pass occupies residues 451-471 (LACIVVMFVTTWLMALVIIFV). Over 472 to 475 (WQKN) the chain is Cytoplasmic. The helical transmembrane segment at 476–496 (ILLALLFVVAFGSIEVVYLSA) threads the bilayer. Topologically, residues 497–503 (AVTKVPQ) are extracellular. Residues 504 to 524 (GGWAPIVFAFVFMLVMYVWHY) traverse the membrane as a helical segment. Topologically, residues 525 to 811 (GSRRKYLFDL…LVEVGMIYYV (287 aa)) are cytoplasmic. A disordered region spans residues 680-702 (TGLVMRDSNNEASGTSLTRSSRS).

This sequence belongs to the HAK/KUP transporter (TC 2.A.72.3) family. As to expression, expressed in roots and shoots.

Its subcellular location is the membrane. Functionally, high-affinity potassium transporter. In Oryza sativa subsp. japonica (Rice), this protein is Potassium transporter 7 (HAK7).